A 117-amino-acid chain; its full sequence is Large ribosomal subunit protein eL18 (117 aa).

It belongs to the eukaryotic ribosomal protein eL18 family.

The protein is Large ribosomal subunit protein eL18 of Archaeoglobus fulgidus (strain ATCC 49558 / DSM 4304 / JCM 9628 / NBRC 100126 / VC-16).